The chain runs to 188 residues: Putative manganese efflux pump MntP (188 aa).

A run of 6 helical transmembrane segments spans residues 3–23 (LYAL…VALA), 35–55 (IAAT…AGWV), 63–83 (FISE…GLKM), 104–126 (WMTV…GLAF), 140–160 (MAAT…GVLF), and 167–187 (AGGL…LGLI).

The protein belongs to the MntP (TC 9.B.29) family.

Its subcellular location is the cell inner membrane. Its function is as follows. Probably functions as a manganese efflux pump. The chain is Putative manganese efflux pump MntP from Neisseria gonorrhoeae (strain ATCC 700825 / FA 1090).